The following is a 228-amino-acid chain: Ribonuclease 3 (228 aa).

Residues 5-127 (LMALQARLQH…VIGAVYLDAG (123 aa)) form the RNase III domain. Glutamate 40 is a Mg(2+) binding site. Aspartate 44 is an active-site residue. Residues aspartate 113 and glutamate 116 each coordinate Mg(2+). Residue glutamate 116 is part of the active site. One can recognise a DRBM domain in the interval 154–224 (DPKTELQEWL…AAAMLQTLKA (71 aa)).

The protein belongs to the ribonuclease III family. In terms of assembly, homodimer. It depends on Mg(2+) as a cofactor.

It localises to the cytoplasm. It carries out the reaction Endonucleolytic cleavage to 5'-phosphomonoester.. Digests double-stranded RNA. Involved in the processing of primary rRNA transcript to yield the immediate precursors to the large and small rRNAs (23S and 16S). Processes some mRNAs, and tRNAs when they are encoded in the rRNA operon. Processes pre-crRNA and tracrRNA of type II CRISPR loci if present in the organism. In Albidiferax ferrireducens (strain ATCC BAA-621 / DSM 15236 / T118) (Rhodoferax ferrireducens), this protein is Ribonuclease 3.